The following is a 133-amino-acid chain: Large-conductance mechanosensitive channel (133 aa).

2 helical membrane-spanning segments follow: residues 14–34 (VVDL…VSSL) and 67–87 (GNFI…FMFV).

It belongs to the MscL family. As to quaternary structure, homopentamer.

It is found in the cell membrane. Functionally, channel that opens in response to stretch forces in the membrane lipid bilayer. May participate in the regulation of osmotic pressure changes within the cell. This Bacillus cereus (strain AH187) protein is Large-conductance mechanosensitive channel.